We begin with the raw amino-acid sequence, 492 residues long: Anthranilate synthase component 1 (492 aa).

Residues Ser-48 and Pro-273–Met-275 contribute to the L-tryptophan site. Gly-308–Thr-309 lines the chorismate pocket. Position 335 (Glu-335) interacts with Mg(2+). Residues Tyr-423, Arg-443, Gly-457–Gly-459, and Gly-459 each bind chorismate. Glu-472 contributes to the Mg(2+) binding site.

It belongs to the anthranilate synthase component I family. As to quaternary structure, heterotetramer consisting of two non-identical subunits: a beta subunit (TrpG) and a large alpha subunit (TrpE). The cofactor is Mg(2+).

It carries out the reaction chorismate + L-glutamine = anthranilate + pyruvate + L-glutamate + H(+). The protein operates within amino-acid biosynthesis; L-tryptophan biosynthesis; L-tryptophan from chorismate: step 1/5. With respect to regulation, feedback inhibited by tryptophan. In terms of biological role, part of a heterotetrameric complex that catalyzes the two-step biosynthesis of anthranilate, an intermediate in the biosynthesis of L-tryptophan. In the first step, the glutamine-binding beta subunit (TrpG) of anthranilate synthase (AS) provides the glutamine amidotransferase activity which generates ammonia as a substrate that, along with chorismate, is used in the second step, catalyzed by the large alpha subunit of AS (TrpE) to produce anthranilate. In the absence of TrpG, TrpE can synthesize anthranilate directly from chorismate and high concentrations of ammonia. The polypeptide is Anthranilate synthase component 1 (Pseudomonas aeruginosa (strain ATCC 15692 / DSM 22644 / CIP 104116 / JCM 14847 / LMG 12228 / 1C / PRS 101 / PAO1)).